A 237-amino-acid chain; its full sequence is C-type lectin domain family 4 member A (237 aa).

Topologically, residues 1-48 (MTSEITYAEVRFKNEFKSSGINTASSAASKERTAPHKSNTGFPKLLCA) are cytoplasmic. Positions 5–10 (ITYAEV) match the ITIM motif motif. A helical; Signal-anchor for type II membrane protein transmembrane segment spans residues 49–69 (SLLIFFLLLAISFFIAFVIFF). Residues 70–237 (QKYSQLLEKK…SVCEMMKIHL (168 aa)) lie on the Extracellular side of the membrane. 3 cysteine pairs are disulfide-bonded: C106-C117, C134-C230, and C203-C222. The C-type lectin domain occupies 113-231 (FSSNCYFIST…CLGPQRSVCE (119 aa)). Residues V143, N145, and E149 each contribute to the Ca(2+) site. N185 carries an N-linked (GlcNAc...) asparagine glycan. Ca(2+) is bound by residues E195, S197, and E201. Alpha-D-mannopyranose-binding positions include 195-197 (EPS) and E201. An N-acetyl-D-glucosamine-binding site is contributed by 207 to 209 (NFR). Residues N218, D219, and E231 each coordinate Ca(2+).

As to quaternary structure, may interact with PTPN6 via its ITIM motif. Expressed preferentially in hematopoietic tissues. Expressed in all circulating Ag-presenting cells such as dendritic cells, myeloid cells, monocytes, macrophages, B-cells and epidermal Langerhans cells (at protein level). Expressed in peripheral blood leukocytes, neutrophils, moderate quantities in spleen, lymph node, and bone marrow, and at very low levels in thymus.

The protein resides in the cell membrane. In terms of biological role, C-type lectin receptor that binds carbohydrates mannose and fucose but also weakly interacts with N-acetylglucosamine (GlcNAc) in a Ca(2+)-dependent manner. Involved in regulating immune reactivity. Once triggered by antigen, it is internalized by clathrin-dependent endocytosis and delivers its antigenic cargo into the antigen presentation pathway resulting in cross-priming of CD8(+) T cells. This cross-presentation and cross-priming are enhanced by TLR7 and TLR8 agonists with increased expansion of the CD8(+) T cells, high production of IFNG and TNF with reduced levels of IL4, IL5 and IL13. In plasmacytoid dendritic cells, inhibits TLR9-mediated IFNA and TNF production. May be involved via its ITIM motif (immunoreceptor tyrosine-based inhibitory motifs) in the inhibition of B-cell-receptor-mediated calcium mobilization and protein tyrosine phosphorylation. (Microbial infection) Involved in the interaction between HIV-1 virus and dendritic cells. Enhances HIV-1 binding/entry and virus infection. Requires ITIM motif-associated signal transduction pathway involving phosphatases PTPN6 and PTPN11, SYK, Src kinases and MAP kinases. This chain is C-type lectin domain family 4 member A, found in Homo sapiens (Human).